A 336-amino-acid polypeptide reads, in one-letter code: CD226 antigen (336 aa).

Residues 1-18 form the signal peptide; sequence MDYPTLLLALLHVYRALC. 2 consecutive Ig-like C2-type domains span residues 19-126 and 135-239; these read EEVL…QVVQ and PPNS…MRLT. Residues 19–254 are Extracellular-facing; it reads EEVLWHTSVP…TDNQYTRFVT (236 aa). Residues Asn32, Asn83, Asn90, Asn97, Asn147, Asn186, Asn198, and Asn231 are each glycosylated (N-linked (GlcNAc...) asparagine). A disulfide bridge connects residues Cys37 and Cys108. 2 disulfide bridges follow: Cys152–Cys222 and Cys179–Cys199. A helical membrane pass occupies residues 255–275; sequence GGTVLLLLFVISITTIIVIFL. Residues 276–336 lie on the Cytoplasmic side of the membrane; it reads NRRRRRERSD…TFSRRPKTRV (61 aa). The segment at 298 to 319 is disordered; it reads KNYRSPISASQPTNQSMDDTRE. Over residues 302–314 the composition is skewed to polar residues; the sequence is SPISASQPTNQSM. The residue at position 322 (Tyr322) is a Phosphotyrosine.

In terms of assembly, interacts with PVR and NECTIN2. Competes with PVRIG for NECTIN2-binding. Interacts with ITGAL; this interaction mediates CD226 localization to lipid rafts. Phosphorylated.

It is found in the cell membrane. Cell surface receptor that plays an important role in the immune system, particularly in intercellular adhesion, lymphocyte signaling, cytotoxicity and lymphokine secretion mediated by cytotoxic T-cells and NK cells. Functions as a costimulatory receptor upon recognition of target cells, such as virus-infected or tumor cells. Upon binding to its ligands PVR/CD155 or NECTIN2/CD112 on target cells, promotes the cytotoxic activity of NK cells and CTLs, enhancing their ability to kill these cells. Mechanistically, phosphorylation by Src kinases such as LYN of FYN, enables binding to adapter GRB2, leading to activation of VAV1, PI3K and PLCG1. Promotes also activation of kinases ERK and AKT, as well as calcium fluxes. The polypeptide is CD226 antigen (CD226) (Macaca mulatta (Rhesus macaque)).